The chain runs to 355 residues: Blue-sensitive opsin (355 aa).

Residues 1-41 (MKSRPQEFQEDFYIPIPLDTNNITALSPFLVPQDHLGGSGI) lie on the Extracellular side of the membrane. A glycan (N-linked (GlcNAc...) asparagine) is linked at Asn22. A helical membrane pass occupies residues 42 to 66 (FMIMTVFMLFLFIGGTSINVLTIVC). Over 67 to 78 (TVQYKKLRSHLN) the chain is Cytoplasmic. The chain crosses the membrane as a helical span at residues 79-104 (YILVNLAISNLLVSTVGSFTAFVSFL). Over 105-118 (NRYFIFGPTACKIE) the chain is Extracellular. A disulfide bridge links Cys115 with Cys192. A helical membrane pass occupies residues 119–138 (GFVATLGGMVSLWSLSVVAF). The Cytoplasmic portion of the chain corresponds to 139–157 (ERWLVICKPVGNFSFKGTH). Residues 158–181 (AIIGCALTWFFALLASTPPLFGWS) traverse the membrane as a helical segment. The Extracellular portion of the chain corresponds to 182–207 (RYIPEGLQCSCGPDWYTTENKYNNES). Asn205 carries N-linked (GlcNAc...) asparagine glycosylation. The chain crosses the membrane as a helical span at residues 208 to 235 (YVMFLFCFCFGFPFTVILFCYGQLLFTL). Residues 236 to 257 (KSAAKAQADSASTQKAEREVTK) are Cytoplasmic-facing. The chain crosses the membrane as a helical span at residues 258–281 (MVVVMVMGFLVCWLPYASFALWVV). Residues 282 to 289 (FNRGQSFD) lie on the Extracellular side of the membrane. The chain crosses the membrane as a helical span at residues 290-314 (LRLGTIPSCFSKASTVYNPVIYVFM). Residue Lys301 is modified to N6-(retinylidene)lysine. Residues 315-355 (NKQFRSCMMKLIFCGKSPFGDDEEASSSSQVTQVSSVGPEK) are Cytoplasmic-facing. The segment at 334-355 (GDDEEASSSSQVTQVSSVGPEK) is disordered. Residues 340 to 355 (SSSSQVTQVSSVGPEK) are compositionally biased toward low complexity.

This sequence belongs to the G-protein coupled receptor 1 family. Opsin subfamily. In terms of processing, phosphorylated on some or all of the serine and threonine residues present in the C-terminal region. The color pigments are found in the cone photoreceptor cells.

It localises to the membrane. Visual pigments are the light-absorbing molecules that mediate vision. They consist of an apoprotein, opsin, covalently linked to cis-retinal. The polypeptide is Blue-sensitive opsin (B23) (Psalidodon fasciatus (Banded astyanax)).